A 187-amino-acid chain; its full sequence is Probable DNA-directed RNA polymerase subunit delta (187 aa).

Residues 14-81 (LSMIEVAHAL…GNNVWALRSW (68 aa)) enclose the HTH HARE-type domain. Positions 96–187 (EIEDEEEEKP…EDDSDDTDED (92 aa)) are disordered. Composition is skewed to acidic residues over residues 117 to 149 (IEDE…EDKD) and 157 to 187 (ELAE…TDED).

The protein belongs to the RpoE family. RNAP is composed of a core of 2 alpha, a beta and a beta' subunits. The core is associated with a delta subunit and one of several sigma factors.

Its function is as follows. Participates in both the initiation and recycling phases of transcription. In the presence of the delta subunit, RNAP displays an increased specificity of transcription, a decreased affinity for nucleic acids, and an increased efficiency of RNA synthesis because of enhanced recycling. The polypeptide is Probable DNA-directed RNA polymerase subunit delta (Lactococcus lactis subsp. cremoris (strain SK11)).